A 375-amino-acid polypeptide reads, in one-letter code: MGSRRFDAEVYARRLALAAAATADAGLAGLVITPGYDLCYLIGSRAETFERLTALVLPAAGAPAVVLPRLELAALKQSAAAELGLRVCDWVDGDDPYGLVSAVLGGAPVATAVTDSMPALHMLPLADALGVLPVLATDVLRRLRMVKEETEIDALRKAGAAIDRVHARVPEFLVPGRTEADVAADIAEAIVAEGHSEVAFVIVGSGPHGADPHHGYSDRELREGDIVVVDIGGTYGPGYHSDSTRTYSIGEPDSDVAQSYSMLQRAQRAAFEAIRPGVTAEQVDAAARDVLAEAGLAEYFVHRTGHGIGLCVHEEPYIVAGNDLVLVPGMAFSIEPGIYFPGRWGARIEDIVIVTEDGAVSVNNCPHELIVVPVS.

2 consecutive transmembrane segments (helical) span residues Leu-15 to Gly-35 and Leu-55 to Leu-75. Mn(2+)-binding residues include Asp-230, Asp-242, His-306, Glu-335, and Glu-349.

It belongs to the peptidase M24B family. It depends on Mn(2+) as a cofactor.

It is found in the cell membrane. In Mycobacterium bovis (strain ATCC BAA-935 / AF2122/97), this protein is Probable dipeptidase PepE (pepE).